Reading from the N-terminus, the 548-residue chain is Acetylcholine receptor subunit alpha-type des-2 (548 aa).

The first 19 residues, 1–19 (MLIIIQSLLLATTASLCIA), serve as a signal peptide directing secretion. Over 21 to 239 (TPVPTQIRLV…LTLYLRRKPL (219 aa)) the chain is Extracellular. N-linked (GlcNAc...) asparagine glycans are attached at residues asparagine 52, asparagine 96, and asparagine 224. Transmembrane regions (helical) follow at residues 240–260 (FYLV…IVGF), 274–294 (VSLG…VSDQ), and 301–321 (FIPL…LGTV). Residues 422-460 (LIHLSPTAHQPDESISPSAPPVPSSSPLPPPLTPGPADD) form a disordered region. Pro residues predominate over residues 439-455 (SAPPVPSSSPLPPPLTP). Residues 517-537 (FVIFVVAFLIITFGINFIGFI) traverse the membrane as a helical segment. Residues 538–548 (HWHQAGVEYGG) lie on the Cytoplasmic side of the membrane.

The protein belongs to the ligand-gated ion channel (TC 1.A.9) family. Acetylcholine receptor (TC 1.A.9.1) subfamily. In terms of assembly, the functional receptor is a heteromer of deg-3 and des-2. Interacts with ric-3; which is required for proper receptor folding.

It localises to the cell membrane. In terms of biological role, subunit of the non-synaptic neuronal acetylcholine receptor (AChR), which may play a role in chemotaxis towards choline. After binding choline or acetylcholine, the AChR responds by an extensive change in conformation that affects all subunits and leads to opening of an ion-conducting channel across the plasma membrane. This Caenorhabditis elegans protein is Acetylcholine receptor subunit alpha-type des-2 (des-2).